We begin with the raw amino-acid sequence, 390 residues long: F-box/kelch-repeat protein At4g39753 (390 aa).

The span at 1–16 (MVTFWAETAASAATTS) shows a compositional bias: low complexity. The segment at 1–33 (MVTFWAETAASAATTSKGEPPSKKRKTNPSPPP) is disordered. The 48-residue stretch at 32–79 (PPSLLSLPDVLILNCLSRIPKSYYPKLSIVSKTFRDLIISIDLNHARF) folds into the F-box domain. Kelch repeat units follow at residues 139–192 (PLLV…VFDR), 193–243 (KIYV…MIQG), 245–286 (FYVR…WYSC), and 288–321 (PNSF…LIET).

The chain is F-box/kelch-repeat protein At4g39753 from Arabidopsis thaliana (Mouse-ear cress).